A 392-amino-acid chain; its full sequence is Alanine--glyoxylate aminotransferase (392 aa).

At Lys-209 the chain carries N6-(pyridoxal phosphate)lysine. The residue at position 225 (Lys-225) is an N6-acetyllysine; alternate. Lys-225 is subject to N6-succinyllysine; alternate. N6-acetyllysine occurs at positions 234 and 312. Arg-360 is a substrate binding site. The short motif at 390-392 (KKL) is the Microbody targeting signal element.

It belongs to the class-V pyridoxal-phosphate-dependent aminotransferase family. As to quaternary structure, homodimer. Requires pyridoxal 5'-phosphate as cofactor.

The protein localises to the peroxisome. It carries out the reaction L-serine + pyruvate = 3-hydroxypyruvate + L-alanine. The catalysed reaction is glyoxylate + L-alanine = glycine + pyruvate. Its function is as follows. Peroxisomal aminotransferase that catalyzes the transamination of glyoxylate to glycine and contributes to the glyoxylate detoxification. Also catalyzes the transamination between L-serine and pyruvate and contributes to gluconeogenesis from the L-serine metabolism. This is Alanine--glyoxylate aminotransferase from Pongo abelii (Sumatran orangutan).